The primary structure comprises 954 residues: Leucine--tRNA ligase (954 aa).

A 'HIGH' region motif is present at residues 40 to 51 (PYPSGAGLHVGH). A 'KMSKS' region motif is present at residues 729–733 (KMSKS). Lys732 provides a ligand contact to ATP.

This sequence belongs to the class-I aminoacyl-tRNA synthetase family.

It localises to the cytoplasm. It carries out the reaction tRNA(Leu) + L-leucine + ATP = L-leucyl-tRNA(Leu) + AMP + diphosphate. This Flavobacterium johnsoniae (strain ATCC 17061 / DSM 2064 / JCM 8514 / BCRC 14874 / CCUG 350202 / NBRC 14942 / NCIMB 11054 / UW101) (Cytophaga johnsonae) protein is Leucine--tRNA ligase.